A 234-amino-acid polypeptide reads, in one-letter code: Thymidine kinase, cytosolic (234 aa).

At S2 the chain carries N-acetylserine. Residues S2 and S13 each carry the phosphoserine modification. ATP-binding positions include 26–33, 58–60, and 97–100; these read GPMFSGKS, DTR, and DEGQ. The Proton acceptor role is filled by E98. F128 contacts substrate. Zn(2+)-binding residues include C153 and C156. Residues 172-176 and Y181 each bind substrate; that span reads VEVIG. The Zn(2+) site is built by C185 and C188. Positions 203–205 match the KEN box motif; sequence KEN. The residue at position 231 (S231) is a Phosphoserine.

This sequence belongs to the thymidine kinase family. In terms of assembly, homotetramer. Tetramerization from dimerization is induced by ATP and increases catalytic efficiency due to a high affinity for thymidine. Tetramerization is inhibited by phosphorylation at Ser-13. Interacts (via the KEN box) with FZR1. Post-translationally, phosphorylated on Ser-13 in mitosis. Phosphorylation of Ser-13 by CDK1 during mitosis reduces homotetramerization and catalytic efficiency when DNA replication is complete and intracellular TK1 is still present at a high level. In terms of processing, polyubiquitinated. Postmitosis, ubiquitination leads to proteasomal degradation. The KEN box sequence located at the C-terminal region targets for degradation by the anaphase promoting complex (APC/C) activated and rate-limited by FZR1.

It localises to the cytoplasm. The enzyme catalyses thymidine + ATP = dTMP + ADP + H(+). Its function is as follows. Cell-cycle-regulated enzyme of importance in nucleotide metabolism. Catalyzes the first enzymatic step in the salvage pathway converting thymidine into thymidine monophosphate. Transcriptional regulation limits expression to the S phase of the cell cycle and transient expression coincides with the oscillation in the intracellular dTTP concentration. Also important for the activation of anticancer and antiviral nucleoside analog prodrugs such as 1-b-d-arabinofuranosylcytosine (AraC) and 3c-azido-3c-deoxythymidine (AZT). This chain is Thymidine kinase, cytosolic, found in Homo sapiens (Human).